The chain runs to 218 residues: MAYPGYGGGFGNFSIQVPGMQMGQPVPETGPGILLDGYSGCPAFSDTYSSAGDSVYTYFSAVAGQDGEVDAEELQRCLTQSGISGTYSPFSLETCRIMIAMLDRDYTGKMGFNAFKELWSALNAWKENFMTVDQDGSGTVEHHELRQAIGLMGYRLSPQTLTTIVKRYSKNGRIFFDDYVACCVKLRALTDFFRKRDHLQQGSANFIYDDFLQGTMAI.

4 EF-hand domains span residues 49 to 84 (SSAGDSVYTYFSAVAGQDGEVDAEELQRCLTQSGIS), 85 to 119 (GTYSPFSLETCRIMIAMLDRDYTGKMGFNAFKELW), 120 to 155 (SALNAWKENFMTVDQDGSGTVEHHELRQAIGLMGYR), and 156 to 191 (LSPQTLTTIVKRYSKNGRIFFDDYVACCVKLRALTD). Residues Asp103, Asp105, Thr107, Lys109, Asp133, Asp135, Ser137, Thr139, and Glu144 each coordinate Ca(2+).

In terms of assembly, homodimer. Interacts with SRI and LCP1.

It is found in the cytoplasm. The protein resides in the cytoplasmic granule membrane. Functionally, calcium-binding protein that may play a role in the adhesion of neutrophils to fibronectin. May play a role in the formation of focal adhesions. This is Grancalcin (GCA) from Pongo abelii (Sumatran orangutan).